A 200-amino-acid polypeptide reads, in one-letter code: 3-isopropylmalate dehydratase small subunit (200 aa).

The protein belongs to the LeuD family. LeuD type 1 subfamily. As to quaternary structure, heterodimer of LeuC and LeuD.

It carries out the reaction (2R,3S)-3-isopropylmalate = (2S)-2-isopropylmalate. Its pathway is amino-acid biosynthesis; L-leucine biosynthesis; L-leucine from 3-methyl-2-oxobutanoate: step 2/4. Functionally, catalyzes the isomerization between 2-isopropylmalate and 3-isopropylmalate, via the formation of 2-isopropylmaleate. This chain is 3-isopropylmalate dehydratase small subunit, found in Proteus mirabilis (strain HI4320).